The following is a 676-amino-acid chain: DNA ligase (676 aa).

Residues 35–39 (DAEYD), 84–85 (SL), and E118 contribute to the NAD(+) site. The N6-AMP-lysine intermediate role is filled by K120. The NAD(+) site is built by R141, E176, K284, and K308. Positions 402, 405, 420, and 426 each coordinate Zn(2+). One can recognise a BRCT domain in the interval 595–676 (SYLSLIHGKI…WLQYTQSSEN (82 aa)).

The protein belongs to the NAD-dependent DNA ligase family. LigA subfamily. It depends on Mg(2+) as a cofactor. Mn(2+) is required as a cofactor.

It carries out the reaction NAD(+) + (deoxyribonucleotide)n-3'-hydroxyl + 5'-phospho-(deoxyribonucleotide)m = (deoxyribonucleotide)n+m + AMP + beta-nicotinamide D-nucleotide.. DNA ligase that catalyzes the formation of phosphodiester linkages between 5'-phosphoryl and 3'-hydroxyl groups in double-stranded DNA using NAD as a coenzyme and as the energy source for the reaction. It is essential for DNA replication and repair of damaged DNA. This is DNA ligase from Ehrlichia chaffeensis (strain ATCC CRL-10679 / Arkansas).